The chain runs to 269 residues: Regulating synaptic membrane exocytosis protein 4 (269 aa).

Residues 115–233 (PMGGVEIGLQ…DLTTLAVGWY (119 aa)) enclose the C2 domain. Serine 254 and serine 257 each carry phosphoserine.

In terms of assembly, binds PPFIA3. As to expression, brain specific.

It localises to the synapse. Regulates synaptic membrane exocytosis. This chain is Regulating synaptic membrane exocytosis protein 4 (Rims4), found in Rattus norvegicus (Rat).